The primary structure comprises 90 residues: Essential MCU regulator, mitochondrial (90 aa).

Residues 49 to 68 form a helical membrane-spanning segment; the sequence is GVLKLIFVSASSLYIGGLIA.

This sequence belongs to the SMDT1/EMRE family.

The protein resides in the mitochondrion inner membrane. In terms of biological role, essential regulatory subunit of the mitochondrial calcium uniporter (mcu-1) channel, a protein that mediates calcium uptake into mitochondria. The chain is Essential MCU regulator, mitochondrial from Caenorhabditis elegans.